Here is a 753-residue protein sequence, read N- to C-terminus: Polyribonucleotide nucleotidyltransferase (753 aa).

Residues Asp-543 and Asp-549 each coordinate Mg(2+). Positions 609–668 (PRITTVKIPVAKIGELIGPKGKNINALTEETGANISIEDDGTVFISAADGASAEAAIEKI) constitute a KH domain. An S1 motif domain is found at 680-749 (GERFLGTVVK…NRGKISLVPV (70 aa)).

This sequence belongs to the polyribonucleotide nucleotidyltransferase family. Mg(2+) is required as a cofactor.

It localises to the cytoplasm. It carries out the reaction RNA(n+1) + phosphate = RNA(n) + a ribonucleoside 5'-diphosphate. Functionally, involved in mRNA degradation. Catalyzes the phosphorolysis of single-stranded polyribonucleotides processively in the 3'- to 5'-direction. This chain is Polyribonucleotide nucleotidyltransferase, found in Corynebacterium glutamicum (strain R).